The primary structure comprises 685 residues: Methionine--tRNA ligase (685 aa).

The 'HIGH' region motif lies at 12-22; it reads PYANGSIHLGH. Zn(2+)-binding residues include Cys143, Cys146, Cys156, and Cys159. A 'KMSKS' region motif is present at residues 339–343; the sequence is KMSKS. Lys342 is a binding site for ATP. Positions 582–685 constitute a tRNA-binding domain; sequence DFMKIDMRVA…AGAQPGDKVG (104 aa).

This sequence belongs to the class-I aminoacyl-tRNA synthetase family. MetG type 1 subfamily. As to quaternary structure, homodimer. Zn(2+) serves as cofactor.

The protein resides in the cytoplasm. It catalyses the reaction tRNA(Met) + L-methionine + ATP = L-methionyl-tRNA(Met) + AMP + diphosphate. Functionally, is required not only for elongation of protein synthesis but also for the initiation of all mRNA translation through initiator tRNA(fMet) aminoacylation. The polypeptide is Methionine--tRNA ligase (Neisseria meningitidis serogroup A / serotype 4A (strain DSM 15465 / Z2491)).